The chain runs to 431 residues: Serine--tRNA ligase (431 aa).

Position 235–237 (235–237 (TAE)) interacts with L-serine. Residues 266 to 268 (RRE) and Val282 each bind ATP. Glu289 serves as a coordination point for L-serine. ATP is bound at residue 353 to 356 (EASS). Ser389 is a binding site for L-serine.

It belongs to the class-II aminoacyl-tRNA synthetase family. Type-1 seryl-tRNA synthetase subfamily. In terms of assembly, homodimer. The tRNA molecule binds across the dimer.

Its subcellular location is the cytoplasm. The enzyme catalyses tRNA(Ser) + L-serine + ATP = L-seryl-tRNA(Ser) + AMP + diphosphate + H(+). It carries out the reaction tRNA(Sec) + L-serine + ATP = L-seryl-tRNA(Sec) + AMP + diphosphate + H(+). The protein operates within aminoacyl-tRNA biosynthesis; selenocysteinyl-tRNA(Sec) biosynthesis; L-seryl-tRNA(Sec) from L-serine and tRNA(Sec): step 1/1. Its function is as follows. Catalyzes the attachment of serine to tRNA(Ser). Is also able to aminoacylate tRNA(Sec) with serine, to form the misacylated tRNA L-seryl-tRNA(Sec), which will be further converted into selenocysteinyl-tRNA(Sec). The chain is Serine--tRNA ligase from Pelodictyon phaeoclathratiforme (strain DSM 5477 / BU-1).